The chain runs to 131 residues: Arsenate reductase 1 (131 aa).

Catalysis depends on nucleophile residues cysteine 10, cysteine 82, and cysteine 89. 2 disulfides stabilise this stretch: cysteine 10–cysteine 82 and cysteine 82–cysteine 89.

It belongs to the low molecular weight phosphotyrosine protein phosphatase family. Thioredoxin-coupled ArsC subfamily.

It localises to the cytoplasm. It catalyses the reaction arsenate + [thioredoxin]-dithiol + H(+) = arsenite + [thioredoxin]-disulfide + H2O. Functionally, catalyzes the reduction of arsenate [As(V)] to arsenite [As(III)]. The chain is Arsenate reductase 1 from Staphylococcus saprophyticus subsp. saprophyticus (strain ATCC 15305 / DSM 20229 / NCIMB 8711 / NCTC 7292 / S-41).